The following is an 875-amino-acid chain: Leucine--tRNA ligase (875 aa).

Residues 1–20 (MPSAGSVNAANPAVDTSAQT) are compositionally biased toward polar residues. The tract at residues 1–22 (MPSAGSVNAANPAVDTSAQTGR) is disordered. The 'HIGH' region motif lies at 60 to 70 (PYPSGSLHMGH). The short motif at 634-638 (KMSKS) is the 'KMSKS' region element. Lysine 637 serves as a coordination point for ATP.

This sequence belongs to the class-I aminoacyl-tRNA synthetase family.

It localises to the cytoplasm. It carries out the reaction tRNA(Leu) + L-leucine + ATP = L-leucyl-tRNA(Leu) + AMP + diphosphate. The sequence is that of Leucine--tRNA ligase from Synechococcus sp. (strain CC9605).